A 454-amino-acid chain; its full sequence is ESX-1 secretion-associated protein EspB (454 aa).

Disordered stretches follow at residues 17 to 40 (RADEVEAPMATPPTDVPQAPSGLT), 82 to 128 (GEVE…AGES), and 391 to 454 (AGQG…QDNK). Over residues 391–422 (AGQGGGAAGRGMAGGGMGMPMGGAGQGQGGAK) the composition is skewed to gly residues.

This sequence belongs to the EspB family. Cleaved at close to the C-terminus during secretion.

Its subcellular location is the secreted. The chain is ESX-1 secretion-associated protein EspB from Mycobacterium marinum (strain ATCC BAA-535 / M).